A 1339-amino-acid chain; its full sequence is Aldehyde oxidase 1 (1339 aa).

The 2Fe-2S ferredoxin-type domain occupies 5-92 (SELLFYVNGR…GAAVTTVEGI (88 aa)). Positions 44, 49, 52, and 74 each coordinate [2Fe-2S] cluster. Glutamine 113 contacts Mo-molybdopterin. Residues cysteine 114, cysteine 117, cysteine 149, and cysteine 151 each contribute to the [2Fe-2S] cluster site. Cysteine 151 serves as a coordination point for Mo-molybdopterin. Positions 236–421 (FGSDRMTWIS…ISVNIPYSRK (186 aa)) constitute an FAD-binding PCMH-type domain. Residues 264-271 (VVMGNTSV), alanine 345, serine 354, histidine 358, aspartate 367, and leucine 411 each bind FAD. Residues 807 to 808 (AF) and methionine 1048 each bind Mo-molybdopterin. Residue serine 1069 is modified to Phosphoserine. Residues 1089–1092 (GSVV), glutamine 1204, and leucine 1269 contribute to the Mo-molybdopterin site. Glutamate 1271 serves as the catalytic Proton acceptor; for azaheterocycle hydroxylase activity.

It belongs to the xanthine dehydrogenase family. In terms of assembly, homodimer. Requires [2Fe-2S] cluster as cofactor. FAD is required as a cofactor. The cofactor is Mo-molybdopterin. Post-translationally, the N-terminus is blocked. In terms of tissue distribution, expressed at high levels in liver, lung and spleen. Also expressed in kindey, eye, testis, duodenum, esophagus and thymus (at protein level).

It localises to the cytoplasm. It carries out the reaction an aldehyde + O2 + H2O = a carboxylate + H2O2 + H(+). It catalyses the reaction retinal + O2 + H2O = retinoate + H2O2 + H(+). In terms of biological role, oxidase with broad substrate specificity, oxidizing aromatic azaheterocycles, such as N1-methylnicotinamide, N-methylphthalazinium and phthalazine, as well as aldehydes, such as benzaldehyde, retinal, pyridoxal, and vanillin. Plays a key role in the metabolism of xenobiotics and drugs containing aromatic azaheterocyclic substituents. Is probably involved in the regulation of reactive oxygen species homeostasis. May be a prominent source of superoxide generation via the one-electron reduction of molecular oxygen. May also catalyze nitric oxide (NO) production via the reduction of nitrite to NO with NADH or aldehyde as electron donor. May play a role in adipogenesis. The chain is Aldehyde oxidase 1 from Bos taurus (Bovine).